Reading from the N-terminus, the 317-residue chain is Melanocyte-stimulating hormone receptor (317 aa).

Residues 1-37 lie on the Extracellular side of the membrane; that stretch reads MAVQGSQRRLLGSLNSTPTAIPQLGLAANQTGARCLE. N29 is a glycosylation site (N-linked (GlcNAc...) asparagine). A helical transmembrane segment spans residues 38–63; that stretch reads VSISDGLFLSLGLVSLVENALVVATI. Residues 64 to 72 lie on the Cytoplasmic side of the membrane; it reads AKNRNLHSP. A helical transmembrane segment spans residues 73–93; that stretch reads MYCFICCLALSDLLVSGSNVL. Topologically, residues 94–118 are extracellular; that stretch reads ETAVILLLEAGALVARAAVLQQLDN. A helical membrane pass occupies residues 119-140; the sequence is VIDVITCSSMLSSLCFLGAIAV. Residues 141–163 are Cytoplasmic-facing; that stretch reads DRYISIFYALRYHSIVTLPRARR. The helical transmembrane segment at 164–183 threads the bilayer; that stretch reads AVAAIWVASVVFSTLFIAYY. The Extracellular portion of the chain corresponds to 184–191; sequence DHVAVLLC. Residues 192-211 traverse the membrane as a helical segment; it reads LVVFFLAMLVLMAVLYVHML. The Cytoplasmic segment spans residues 212-240; the sequence is ARACQHAQGIARLHKRQRPVHQGFGLKGA. A helical transmembrane segment spans residues 241 to 266; the sequence is VTLTILLGIFFLCWGPFFLHLTLIVL. Residues 267–279 are Extracellular-facing; it reads CPEHPTCGCIFKN. Residues 280–300 traverse the membrane as a helical segment; sequence FNLFLALIICNAIIDPLIYAF. The Cytoplasmic portion of the chain corresponds to 301 to 317; that stretch reads HSQELRRTLKEVLTCSW. The S-palmitoyl cysteine moiety is linked to residue C315.

It belongs to the G-protein coupled receptor 1 family. As to quaternary structure, interacts with MGRN1, but does not undergo MGRN1-mediated ubiquitination; this interaction competes with GNAS-binding and thus inhibits agonist-induced cAMP production. Interacts with OPN3; the interaction results in a decrease in MC1R-mediated cAMP signaling and ultimately a decrease in melanin production in melanocytes. As to expression, expressed in melanocytes. Expressed in corticoadrenal tissue.

Its subcellular location is the cell membrane. Its function is as follows. Receptor for MSH (alpha, beta and gamma) and ACTH. The activity of this receptor is mediated by G proteins which activate adenylate cyclase. Mediates melanogenesis, the production of eumelanin (black/brown) and phaeomelanin (red/yellow), via regulation of cAMP signaling in melanocytes. This chain is Melanocyte-stimulating hormone receptor (MC1R), found in Homo sapiens (Human).